Reading from the N-terminus, the 327-residue chain is Eukaryotic translation initiation factor 3 subunit I (327 aa).

6 WD repeats span residues 8–49 (GHDR…GTYD), 51–91 (HNGV…NSVS), 144–183 (SLQTQANSCVWTHLDDTVCVGNEKGNVHQYDIRKGDDIVN), 188–227 (AHKFQINDMQMSTDESFLITASKDKTARLFDARTLDCLKT), 229–268 (KAERPVNSAAISPIRDHVILGGGEEAMKVTQTTAASGHFE), and 285–324 (GHFGPINTLAFHPGGNCVVSGGEDGYVRIQEFDTDYLKFD).

This sequence belongs to the eIF-3 subunit I family. In terms of assembly, component of the eukaryotic translation initiation factor 3 (eIF-3) complex.

Its subcellular location is the cytoplasm. Component of the eukaryotic translation initiation factor 3 (eIF-3) complex, which is involved in protein synthesis of a specialized repertoire of mRNAs and, together with other initiation factors, stimulates binding of mRNA and methionyl-tRNAi to the 40S ribosome. The eIF-3 complex specifically targets and initiates translation of a subset of mRNAs involved in cell proliferation. This chain is Eukaryotic translation initiation factor 3 subunit I, found in Brugia malayi (Filarial nematode worm).